A 361-amino-acid chain; its full sequence is Cytochrome c peroxidase, mitochondrial (361 aa).

The transit peptide at 1–41 directs the protein to the mitochondrion; it reads MASAARSASRAFLRSSLRPAVRSSRFALPTQGLRVASRRGY. His122 (proton acceptor) is an active-site residue. Position 245 (His245) interacts with heme b. Trp261 (tryptophan radical intermediate) is an active-site residue.

The protein belongs to the peroxidase family. Cytochrome c peroxidase subfamily. In terms of assembly, forms a one-to-one complex with cytochrome c. Heme b serves as cofactor.

It localises to the mitochondrion matrix. The protein localises to the mitochondrion intermembrane space. The catalysed reaction is 2 Fe(II)-[cytochrome c] + H2O2 + 2 H(+) = 2 Fe(III)-[cytochrome c] + 2 H2O. Functionally, destroys radicals which are normally produced within the cells and which are toxic to biological systems. The chain is Cytochrome c peroxidase, mitochondrial (ccp1) from Emericella nidulans (strain FGSC A4 / ATCC 38163 / CBS 112.46 / NRRL 194 / M139) (Aspergillus nidulans).